The chain runs to 119 residues: Large ribosomal subunit protein uL14 (119 aa).

The protein belongs to the universal ribosomal protein uL14 family. Part of the 50S ribosomal subunit. Forms a cluster with proteins L3 and L19. In the 70S ribosome, L14 and L19 interact and together make contacts with the 16S rRNA in bridges B5 and B8.

Binds to 23S rRNA. Forms part of two intersubunit bridges in the 70S ribosome. The sequence is that of Large ribosomal subunit protein uL14 from Ehrlichia canis (strain Jake).